The chain runs to 267 residues: Tryptophan synthase alpha chain (267 aa).

Catalysis depends on proton acceptor residues Glu-43 and Asp-54.

It belongs to the TrpA family. As to quaternary structure, tetramer of two alpha and two beta chains.

The catalysed reaction is (1S,2R)-1-C-(indol-3-yl)glycerol 3-phosphate + L-serine = D-glyceraldehyde 3-phosphate + L-tryptophan + H2O. The protein operates within amino-acid biosynthesis; L-tryptophan biosynthesis; L-tryptophan from chorismate: step 5/5. Functionally, the alpha subunit is responsible for the aldol cleavage of indoleglycerol phosphate to indole and glyceraldehyde 3-phosphate. In Bacillus pumilus (strain SAFR-032), this protein is Tryptophan synthase alpha chain.